The following is a 543-amino-acid chain: Protein SGE1 (543 aa).

The Cytoplasmic segment spans residues 1–8; that stretch reads MKSTLSLT. The chain crosses the membrane as a helical span at residues 9–29; it reads LCVISLLLTLFLAALDIVIVV. The Extracellular segment spans residues 30–41; that stretch reads TLYDTIGIKFHD. The chain crosses the membrane as a helical span at residues 42-62; it reads FGNIGWLVTGYALSNAVFMLL. The Cytoplasmic portion of the chain corresponds to 63 to 79; it reads WGRLAEILGTKECLMIS. Residues 80–100 form a helical membrane-spanning segment; that stretch reads VIVFEIGSLISALSNSMATLI. The Extracellular portion of the chain corresponds to 101–103; sequence SGR. Residues 104 to 124 traverse the membrane as a helical segment; it reads VVAGFGGSGIESLAFVVGTSI. At 125-131 the chain is on the cytoplasmic side; the sequence is VRENHRG. A helical transmembrane segment spans residues 132–152; sequence IMITALAISYVIAEGVGPFIG. Residues 153–162 lie on the Extracellular side of the membrane; that stretch reads GAFNEHLSWR. The helical transmembrane segment at 163–183 threads the bilayer; that stretch reads WCFYINLPIGAFAFIILAFCN. The Cytoplasmic portion of the chain corresponds to 184–227; that stretch reads TSGEPHQKMWLPSKIKKIMNYDYGELLKASFWKNTFEVLVFKLD. The helical transmembrane segment at 228-248 threads the bilayer; it reads MVGIILSSAGFTLLMLGLSFG. Residues 249–255 lie on the Extracellular side of the membrane; the sequence is GNNFPWN. The helical transmembrane segment at 256–276 threads the bilayer; it reads SGIIICFFTVGPILLLLFCAY. The Cytoplasmic segment spans residues 277-300; sequence DFHFLSLSGLHYDNKRIKPLLTWN. Residues 301–321 traverse the membrane as a helical segment; sequence IASNCGIFTSSITGFLSCFAY. The Extracellular segment spans residues 322–341; sequence ELQSAYLVQLYQLVFKKKPT. Residues 342 to 362 form a helical membrane-spanning segment; that stretch reads LASIHLWELSIPAMIATMAIA. Residues 363-373 lie on the Cytoplasmic side of the membrane; sequence YLNSKYGIIKP. A helical membrane pass occupies residues 374–394; the sequence is AIVFGVLCGIVGSGLFTLING. The Extracellular portion of the chain corresponds to 395–399; it reads ELSQS. Residues 400–420 form a helical membrane-spanning segment; sequence IGYSILPGIAFGSIFQATLLS. The Cytoplasmic portion of the chain corresponds to 421–443; it reads SQVQITSDDPDFQNKFIEVTAFN. A helical transmembrane segment spans residues 444-464; that stretch reads SFAKSLGFAFGGNMGAMIFTA. The Extracellular segment spans residues 465–508; the sequence is SLKNQMRSSQLNIPQFTSVETLLAYSTEHYDGPQSSLSKFINTA. The helical transmembrane segment at 509–529 threads the bilayer; it reads IHDVFYCALGCYALSFFFGIF. Residues 530–543 are Cytoplasmic-facing; sequence TSSKKTTISAKKQQ.

The protein belongs to the major facilitator superfamily.

Its subcellular location is the membrane. In terms of biological role, drug export permease. Multi-copy suppressor of loss-of-function mutation of GAL11. Involved specifically in transcription of GAL4-dependent genes. Can link GAL4 with the basal transcription machinery if GAL11 is missing. Confers resistance to 10-N-nonyl acridine orange (NAO) and in general to cationic dyes. The chain is Protein SGE1 (SGE1) from Saccharomyces cerevisiae (strain ATCC 204508 / S288c) (Baker's yeast).